The chain runs to 276 residues: uncharacterized protein (276 aa).

A signal peptide spans 1 to 19 (MKKWLICSFVLVLLVSFTA). Cys20 carries the N-palmitoyl cysteine lipid modification. Cys20 is lipidated: S-diacylglycerol cysteine.

This sequence belongs to the NlpA lipoprotein family.

The protein localises to the cell membrane. This is an uncharacterized protein from Bacillus subtilis (strain 168).